The primary structure comprises 876 residues: Alanine--tRNA ligase (876 aa).

Lys-74 bears the N6-acetyllysine mark. The Zn(2+) site is built by His-564, His-568, Cys-666, and His-670.

The protein belongs to the class-II aminoacyl-tRNA synthetase family. In terms of assembly, homotetramer. Zn(2+) is required as a cofactor.

It is found in the cytoplasm. The catalysed reaction is tRNA(Ala) + L-alanine + ATP = L-alanyl-tRNA(Ala) + AMP + diphosphate. Functionally, catalyzes the attachment of alanine to tRNA(Ala) in a two-step reaction: alanine is first activated by ATP to form Ala-AMP and then transferred to the acceptor end of tRNA(Ala). Also edits incorrectly charged Ser-tRNA(Ala) and Gly-tRNA(Ala) via its editing domain. In Escherichia coli O157:H7, this protein is Alanine--tRNA ligase.